We begin with the raw amino-acid sequence, 419 residues long: Transcription factor IIIB 50 kDa subunit (419 aa).

A TFIIB-type zinc finger spans residues 2-36 (PGRGRCPDCGSTELVEDSHYSQSQLVCSDCGCVVT). Residues Cys-7, Cys-10, Cys-28, and Cys-31 each contribute to the Zn(2+) site. A run of 2 repeats spans residues 72–157 (GLRR…MQIV) and 173–249 (VKTY…SLAR). The interaction with target DNA stretch occupies residues 108–114 (AARLQKK). A compositionally biased stretch (basic and acidic residues) spans 314 to 326 (DGTAEVETREKEP). Positions 314-351 (DGTAEVETREKEPPGWGQGQGEGEVGNNSLGLPQGKRP) are disordered. Ser-353 is modified (phosphoserine). The segment at 357–363 (LLPPCML) is required for the formation of a ternary complex with DNA and TBP; not required for interaction with TBP in the absence of DNA. Cys-361 bears the Cysteine sulfenic acid (-SOH) mark. Residues 365-419 (SPKRICPVPPVSTVTGDENISDSEIEQYLRTPQEVRDFQRAQAARQAATSVPNPP) form a required for interaction with TBP and formation of a ternary complex with DNA and TBP region.

The protein belongs to the TFIIB family. In terms of assembly, component of TFIIIB complexes. The TFIIIB complex has two activities, alpha and beta. The TFIIIB-alpha activity complex is composed of TBP, BDP1, and a complex containing both BRF2 and at least four stably associated proteins; this complex inhibits the transcription by pol III via its phosphorylation by CK2; YY1 facilitates the TFIIIB-alpha complex formation. Interacts with TBP; this interaction promotes recruitment of BRF2 to TATA box-containing promoters. Interacts with TBP and the BURE sequence (GC-rich sequence downstream from the TATA box) to form a strong ternary complex which is joined by BDP1; this ternary complex stimulates pol III transcription. Forms a trimeric complex composed of TBP, BRF2 and mini-SNAPc complex (SNAP43, SNAP50, and the N-terminal third of SNAP190) on the promoter. Assembly of the TBP-BRF2 complex is stimulated by SNAP190. Interacts with MAF1 and SNAPC4. In terms of processing, in response to oxidative stress, Cys-361 is reversibly oxidized to cysteine sulfenic acid. Oxidation of Cys-361 impairs formation of a ternary complex with TBP and DNA and down-regulates expression of target genes in response to oxidative stress.

It localises to the nucleus. Its function is as follows. General activator of RNA polymerase III transcription. Factor exclusively required for RNA polymerase III transcription of genes with promoter elements upstream of the initiation sites. Contributes to the regulation of gene expression; functions as activator in the absence of oxidative stress. Down-regulates expression of target genes in response to oxidative stress. Overexpression protects cells against apoptosis in response to oxidative stress. This chain is Transcription factor IIIB 50 kDa subunit (BRF2), found in Homo sapiens (Human).